The chain runs to 130 residues: Small ribosomal subunit protein uS8 (130 aa).

It belongs to the universal ribosomal protein uS8 family. Part of the 30S ribosomal subunit.

Its function is as follows. One of the primary rRNA binding proteins, it binds directly to 16S rRNA central domain where it helps coordinate assembly of the platform of the 30S subunit. The chain is Small ribosomal subunit protein uS8 from Methanoregula boonei (strain DSM 21154 / JCM 14090 / 6A8).